Here is a 116-residue protein sequence, read N- to C-terminus: MIGIDIVQIERIEQLIEKYGQKGLERFLLPQEMEVAKKPQTVAGFWAAKEAVAKALKTGIGKELGFHDIFIYKTEKGAPEFKLLNGKEQMFRIQQTALSISHDAGVAVAVAVIIRC.

The Mg(2+) site is built by Asp-5 and Glu-50.

The protein belongs to the P-Pant transferase superfamily. AcpS family. The cofactor is Mg(2+).

The protein resides in the cytoplasm. The catalysed reaction is apo-[ACP] + CoA = holo-[ACP] + adenosine 3',5'-bisphosphate + H(+). Its function is as follows. Transfers the 4'-phosphopantetheine moiety from coenzyme A to a Ser of acyl-carrier-protein. The protein is Holo-[acyl-carrier-protein] synthase of Nitratiruptor sp. (strain SB155-2).